We begin with the raw amino-acid sequence, 503 residues long: Zinc-regulated transporter 3 (503 aa).

3 helical membrane passes run 8 to 28, 42 to 62, and 75 to 95; these read LLFSLISSVLCILGALCVPLL, LVNYGLSLSAGSMITTSLYML, and FPGLLLGICLSFFLNYLVHAF. Residues 112 to 171 form a disordered region; sequence GSHIHSKSHSHSHSHSHADSHSNFSNDHDLENAPSEHGYATSSSSVSENDPLITKDSDRP. Positions 115-126 are enriched in basic residues; sequence IHSKSHSHSHSH. Residues 127-142 are compositionally biased toward basic and acidic residues; that stretch reads SHADSHSNFSNDHDLE. Phosphoserine is present on residues Ser-178 and Ser-188. 2 disordered regions span residues 221 to 244 and 274 to 295; these read QSERNVPHGCEGSEDNGQSDDKDH and HHSSESPENYGSNQLSHSFSSP. Residues 280 to 295 are compositionally biased toward polar residues; sequence PENYGSNQLSHSFSSP. Helical transmembrane passes span 336 to 356, 371 to 391, 398 to 418, 438 to 458, and 482 to 502; these read IGMQTCLVLALHKFPEGFIIF, IFLSLTIHNFVEGFAMTLPFY, WVAILITAVLGGGSQPLGALI, LLSVTAGFLLVIGLQMFQTGI, and GTTCLKWCCTGVLLILASALF.

The protein belongs to the ZIP transporter (TC 2.A.5) family.

The protein localises to the vacuole membrane. Its function is as follows. Transports zinc from storage in the vacuole to the cytoplasm. In Saccharomyces cerevisiae (strain ATCC 204508 / S288c) (Baker's yeast), this protein is Zinc-regulated transporter 3 (ZRT3).